A 244-amino-acid chain; its full sequence is Isoprenyl transferase (244 aa).

Residue aspartate 20 is part of the active site. Residue aspartate 20 coordinates Mg(2+). Residues 21-24 (GNGR), tryptophan 25, arginine 33, histidine 37, and 65-67 (SSE) contribute to the substrate site. Residue asparagine 68 is the Proton acceptor of the active site. Residues tryptophan 69, arginine 71, arginine 188, and 194–196 (RIS) each bind substrate. Glutamate 207 provides a ligand contact to Mg(2+).

It belongs to the UPP synthase family. As to quaternary structure, homodimer. Mg(2+) is required as a cofactor.

Catalyzes the condensation of isopentenyl diphosphate (IPP) with allylic pyrophosphates generating different type of terpenoids. The chain is Isoprenyl transferase from Rhodopirellula baltica (strain DSM 10527 / NCIMB 13988 / SH1).